Consider the following 740-residue polypeptide: Eukaryotic translation initiation factor 3 subunit B (740 aa).

Over residues 1-10 (MAPSFDTLSE) the composition is skewed to polar residues. The tract at residues 1–20 (MAPSFDTLSEQDLHEEEEEE) is disordered. The region spanning 40–126 (TFVVIDGLPV…HTLLVNKLMD (87 aa)) is the RRM domain. WD repeat units follow at residues 193–230 (AHWT…KQKQ), 232–289 (PHPF…RSFV), 302–343 (EPKK…LLGK), 455–496 (SLKD…SFFA), 513–556 (IEKK…EKPE), and 571–609 (IEHY…HTFA). Positions 695 to 721 (DAYGLPEEADDPKLAKDAAATTQEQGE) are disordered.

This sequence belongs to the eIF-3 subunit B family. In terms of assembly, component of the eukaryotic translation initiation factor 3 (eIF-3) complex.

It is found in the cytoplasm. RNA-binding component of the eukaryotic translation initiation factor 3 (eIF-3) complex, which is involved in protein synthesis of a specialized repertoire of mRNAs and, together with other initiation factors, stimulates binding of mRNA and methionyl-tRNAi to the 40S ribosome. The eIF-3 complex specifically targets and initiates translation of a subset of mRNAs involved in cell proliferation. The polypeptide is Eukaryotic translation initiation factor 3 subunit B (prt1) (Neosartorya fischeri (strain ATCC 1020 / DSM 3700 / CBS 544.65 / FGSC A1164 / JCM 1740 / NRRL 181 / WB 181) (Aspergillus fischerianus)).